A 334-amino-acid polypeptide reads, in one-letter code: Methionyl-tRNA formyltransferase (334 aa).

111 to 114 (SLLP) contributes to the (6S)-5,6,7,8-tetrahydrofolate binding site.

It belongs to the Fmt family.

The enzyme catalyses L-methionyl-tRNA(fMet) + (6R)-10-formyltetrahydrofolate = N-formyl-L-methionyl-tRNA(fMet) + (6S)-5,6,7,8-tetrahydrofolate + H(+). Attaches a formyl group to the free amino group of methionyl-tRNA(fMet). The formyl group appears to play a dual role in the initiator identity of N-formylmethionyl-tRNA by promoting its recognition by IF2 and preventing the misappropriation of this tRNA by the elongation apparatus. This is Methionyl-tRNA formyltransferase from Cyanothece sp. (strain PCC 7425 / ATCC 29141).